Reading from the N-terminus, the 1024-residue chain is Carbamoyl phosphate synthase large chain (1024 aa).

The carboxyphosphate synthetic domain stretch occupies residues 1 to 396; it reads MDIKKILVIG…AWQKAVRMID (396 aa). 12 residues coordinate ATP: Arg125, Arg165, Gly171, Gly172, Lys204, Leu206, Glu211, Gly237, Val238, His239, Gln280, and Glu294. An ATP-grasp 1 domain is found at 129 to 323; the sequence is QKAMREAGIP…LAYIAAKLAL (195 aa). Gln280, Glu294, and Asn296 together coordinate Mg(2+). Mn(2+)-binding residues include Gln280, Glu294, and Asn296. Positions 397 to 536 are oligomerization domain; sequence IGEPGLVGGP…LTYGGQYDDK (140 aa). The segment at 536–917 is carbamoyl phosphate synthetic domain; sequence KTPGVDYLVV…LKSWLSATPN (382 aa). In terms of domain architecture, ATP-grasp 2 spans 660 to 849; it reads SKLLDRLGIK…YMSLVADVLT (190 aa). The ATP site is built by Arg696, Lys735, Glu742, Gly766, Val767, His768, Ser769, Gln809, and Glu820. Gln809, Glu820, and Asn822 together coordinate Mg(2+). Gln809, Glu820, and Asn822 together coordinate Mn(2+). The MGS-like domain maps to 917–1024; that stretch reads NKIPSKTALI…KNGKLEVAPW (108 aa). The tract at residues 918-1024 is allosteric domain; the sequence is KIPSKTALIY…KNGKLEVAPW (107 aa).

This sequence belongs to the CarB family. In terms of assembly, composed of two chains; the small (or glutamine) chain promotes the hydrolysis of glutamine to ammonia, which is used by the large (or ammonia) chain to synthesize carbamoyl phosphate. Tetramer of heterodimers (alpha,beta)4. The cofactor is Mg(2+). Requires Mn(2+) as cofactor.

The enzyme catalyses hydrogencarbonate + L-glutamine + 2 ATP + H2O = carbamoyl phosphate + L-glutamate + 2 ADP + phosphate + 2 H(+). It catalyses the reaction hydrogencarbonate + NH4(+) + 2 ATP = carbamoyl phosphate + 2 ADP + phosphate + 2 H(+). Its pathway is amino-acid biosynthesis; L-arginine biosynthesis; carbamoyl phosphate from bicarbonate: step 1/1. It participates in pyrimidine metabolism; UMP biosynthesis via de novo pathway; (S)-dihydroorotate from bicarbonate: step 1/3. Its function is as follows. Large subunit of the glutamine-dependent carbamoyl phosphate synthetase (CPSase). CPSase catalyzes the formation of carbamoyl phosphate from the ammonia moiety of glutamine, carbonate, and phosphate donated by ATP, constituting the first step of 2 biosynthetic pathways, one leading to arginine and/or urea and the other to pyrimidine nucleotides. The large subunit (synthetase) binds the substrates ammonia (free or transferred from glutamine from the small subunit), hydrogencarbonate and ATP and carries out an ATP-coupled ligase reaction, activating hydrogencarbonate by forming carboxy phosphate which reacts with ammonia to form carbamoyl phosphate. The sequence is that of Carbamoyl phosphate synthase large chain from Pyrobaculum aerophilum (strain ATCC 51768 / DSM 7523 / JCM 9630 / CIP 104966 / NBRC 100827 / IM2).